Here is a 518-residue protein sequence, read N- to C-terminus: DNA-binding protein D-ETS-4 (518 aa).

Disordered stretches follow at residues 74-113 (SQPI…QSSP) and 152-172 (LPPS…SCGE). A compositionally biased stretch (polar residues) spans 84–94 (TAPYTNPSSHQ). A compositionally biased stretch (low complexity) spans 102-113 (PHSAYPSPQSSP). Positions 158–171 (ESNCETPSPRSSCG) are enriched in polar residues. The PNT domain occupies 258-344 (HAKREADAIC…AQLEIWKMAY (87 aa)). The segment at 393 to 426 (APLNGSTTSPPATNASNGGTATVKRPNGGRTGGG) is disordered. Positions 396–412 (NGSTTSPPATNASNGGT) are enriched in polar residues. Residues 430-513 (IHLWQFLKEL…RSQRLVYQFC (84 aa)) constitute a DNA-binding region (ETS).

This sequence belongs to the ETS family. As to expression, transient high expression in pole cells during embryonic stages 8-11.

It localises to the nucleus. Functionally, may have a role in germline development. This chain is DNA-binding protein D-ETS-4 (Ets98B), found in Drosophila melanogaster (Fruit fly).